The sequence spans 862 residues: Protein translocase subunit SecA (862 aa).

ATP is bound by residues Gln86, 104–108, and Asp499; that span reads GEGKT. 4 residues coordinate Zn(2+): Cys848, Cys850, Cys859, and His860.

Belongs to the SecA family. Monomer and homodimer. Part of the essential Sec protein translocation apparatus which comprises SecA, SecYEG and auxiliary proteins SecDF-YajC and YidC. The cofactor is Zn(2+).

The protein localises to the cell inner membrane. It localises to the cytoplasm. The catalysed reaction is ATP + H2O + cellular proteinSide 1 = ADP + phosphate + cellular proteinSide 2.. Its function is as follows. Part of the Sec protein translocase complex. Interacts with the SecYEG preprotein conducting channel. Has a central role in coupling the hydrolysis of ATP to the transfer of proteins into and across the cell membrane, serving both as a receptor for the preprotein-SecB complex and as an ATP-driven molecular motor driving the stepwise translocation of polypeptide chains across the membrane. This Ehrlichia canis (strain Jake) protein is Protein translocase subunit SecA.